The sequence spans 456 residues: Glutamate--tRNA ligase 1 (456 aa).

The 'HIGH' region signature appears at 9 to 19; it reads PSPTGQIHIGN. A 'KMSKS' region motif is present at residues 250–254; sequence GLSKR. Position 253 (Lys-253) interacts with ATP.

This sequence belongs to the class-I aminoacyl-tRNA synthetase family. Glutamate--tRNA ligase type 1 subfamily. Monomer.

It localises to the cytoplasm. It carries out the reaction tRNA(Glu) + L-glutamate + ATP = L-glutamyl-tRNA(Glu) + AMP + diphosphate. Functionally, catalyzes the attachment of glutamate to tRNA(Glu) in a two-step reaction: glutamate is first activated by ATP to form Glu-AMP and then transferred to the acceptor end of tRNA(Glu). The protein is Glutamate--tRNA ligase 1 of Chelativorans sp. (strain BNC1).